Consider the following 302-residue polypeptide: Arginase (302 aa).

Mn(2+)-binding residues include histidine 103, aspartate 126, histidine 128, and aspartate 130. Residues 128–132, 139–141, and aspartate 180 each bind substrate; these read HGDLN and SGN. Mn(2+) contacts are provided by aspartate 229 and aspartate 231. The substrate site is built by threonine 243 and glutamate 274.

It belongs to the arginase family. It depends on Mn(2+) as a cofactor.

It carries out the reaction L-arginine + H2O = urea + L-ornithine. It participates in nitrogen metabolism; urea cycle; L-ornithine and urea from L-arginine: step 1/1. The sequence is that of Arginase (arg) from Staphylococcus aureus (strain COL).